The primary structure comprises 213 residues: Orotate phosphoribosyltransferase (213 aa).

Lys-26 is a binding site for 5-phospho-alpha-D-ribose 1-diphosphate. Residue 34-35 (FF) participates in orotate binding. 5-phospho-alpha-D-ribose 1-diphosphate contacts are provided by residues 72-73 (YK), Arg-99, Lys-100, Lys-103, His-105, and 124-132 (DDVITAGTA). The orotate site is built by Thr-128 and Arg-156.

Belongs to the purine/pyrimidine phosphoribosyltransferase family. PyrE subfamily. Homodimer. It depends on Mg(2+) as a cofactor.

The enzyme catalyses orotidine 5'-phosphate + diphosphate = orotate + 5-phospho-alpha-D-ribose 1-diphosphate. It functions in the pathway pyrimidine metabolism; UMP biosynthesis via de novo pathway; UMP from orotate: step 1/2. Functionally, catalyzes the transfer of a ribosyl phosphate group from 5-phosphoribose 1-diphosphate to orotate, leading to the formation of orotidine monophosphate (OMP). The chain is Orotate phosphoribosyltransferase from Pseudomonas paraeruginosa (strain DSM 24068 / PA7) (Pseudomonas aeruginosa (strain PA7)).